Here is a 335-residue protein sequence, read N- to C-terminus: Nuclear envelope-associated protein 2 (335 aa).

2 coiled-coil regions span residues 55 to 85 and 125 to 260; these read RKEAEKKAKNMEMEICKLQKKLEDRNCELVA and CSVL…LKKK. Positions 239-260 match the Bipartite nuclear localization signal motif; the sequence is KTKELESQLERQRRADQELKKK. Residues 312–329 traverse the membrane as a helical segment; it reads FWDTSGFKIVVSMSMLIL.

As to quaternary structure, forms homomers and heteromers with NEAP1 and NEAP3. Interacts with SUN1 and SUN2.

The protein localises to the nucleus inner membrane. The protein resides in the nucleus. It localises to the nucleoplasm. In Arabidopsis thaliana (Mouse-ear cress), this protein is Nuclear envelope-associated protein 2.